Consider the following 3301-residue polypeptide: Cadherin EGF LAG seven-pass G-type receptor 3 (3301 aa).

The first 31 residues, 1-31, serve as a signal peptide directing secretion; sequence MARRPLWWGLPGPSTPVLLLLLLSLFPFSRE. Residues 32-2531 are Extracellular-facing; the sequence is ELGGGGDQDW…RLEGDLELLA (2500 aa). 2 disordered regions span residues 148 to 189 and 202 to 314; these read LPLD…ARRS and KLWE…NRHP. The span at 267 to 276 shows a compositional bias: basic residues; sequence MRSRGLFRRR. Cadherin domains follow at residues 317-424, 425-536, 537-642, 643-747, 748-849, 850-952, 953-1058, 1059-1160, and 1161-1257; these read PQYN…APVF, EQAQ…APQF, SEKR…APIF, VSTP…RPEF, TMKE…RPVF, QSAH…APQF, VASH…APVF, PAEE…SPVL, and NNFQ…VVII. N623 carries N-linked (GlcNAc...) asparagine glycosylation. N838 carries an N-linked (GlcNAc...) asparagine glycan. Residues N1173, N1213, N1308, and N1318 are each glycosylated (N-linked (GlcNAc...) asparagine). Residues 1366–1424 form the EGF-like 1; calcium-binding domain; the sequence is DDNVCLREPCENYMKCVSVLRFDSSAPFLASTSTLFRPIQPIAGLRCRCPPGFTGDFCE. 9 cysteine pairs are disulfide-bonded: C1370–C1381, C1375–C1412, C1414–C1423, C1430–C1441, C1435–C1450, C1452–C1459, C1468–C1479, C1473–C1489, and C1491–C1502. The region spanning 1426–1460 is the EGF-like 2; calcium-binding domain; it reads ELDLCYSNPCRNGGACARREGGYTCVCRPRFTDCE. The region spanning 1464–1503 is the EGF-like 3; calcium-binding domain; it reads EAGRCVPGVCRNGGTCTNAPNGGFRCQCPAGGAFEGPRCE. A Laminin G-like 1 domain is found at 1504–1708; sequence VAARSFPPSS…VANNGTMAGC (205 aa). N-linked (GlcNAc...) asparagine glycans are attached at residues N1638 and N1702. 4 cysteine pairs are disulfide-bonded: C1682–C1708, C1715–C1726, C1720–C1735, and C1737–C1746. Residues 1711–1747 enclose the EGF-like 4; calcium-binding domain; sequence KSHFCASGPCKNNGFCSERWGGFSCDCPVGFGGKDCR. The Laminin G-like 2 domain occupies 1751–1933; it reads AHPYHFQGNG…SHRVNVEPGC (183 aa). N-linked (GlcNAc...) asparagine glycosylation occurs at N1759. Intrachain disulfides connect C1904–C1933, C1939–C1950, C1944–C1959, C1961–C1970, C1974–C1985, C1979–C1997, C1999–C2008, C2016–C2029, and C2031–C2041. In terms of domain architecture, EGF-like 5; calcium-binding spans 1935–1971; the sequence is VTNPCASGPCPPHADCKDLWQTFSCTCRPGYYGPGCV. The residue at position 1952 (D1952) is a (3R)-3-hydroxyaspartate. Positions 1972 to 2002 constitute an EGF-like 6; calcium-binding domain; sequence DACLLNPCQNQGSCRHLQGAPHGYTCDCVSG. One can recognise an EGF-like 7; calcium-binding domain in the interval 2003–2042; sequence YFGQHCEHRVDQQCPRGWWGSPTCGPCNCDVHKGFDPNCN. The N-linked (GlcNAc...) asparagine glycan is linked to N2042. The EGF-like 8; calcium-binding domain maps to 2044–2079; the sequence is TNGQCHCKEFHYRPRGSDSCLPCDCYPVGSTSRSCA. 5 cysteine pairs are disulfide-bonded: C2048/C2063, C2050/C2066, C2068/C2078, C2087/C2096, and C2099/C2111. A Laminin EGF-like domain is found at 2066–2113; the sequence is CDCYPVGSTSRSCAPHSGQCPCRPGALGRQCNSCDSPFAEVTASGCRV. Phosphotyrosine is present on Y2115. N-linked (GlcNAc...) asparagine glycans are attached at residues N2166, N2185, N2375, N2465, and N2497. Positions 2353–2388 are disordered; it reads LLPSQASQPSPSEVLPTSSNAENATASSVVSPPAPL. Positions 2355-2383 are enriched in low complexity; sequence PSQASQPSPSEVLPTSSNAENATASSVVS. Residues 2357-2521 enclose the GAIN-B domain; that stretch reads QASQPSPSEV…GVLMDASPRE (165 aa). 2 disulfide bridges follow: C2471-C2503 and C2491-C2505. The segment at 2471-2521 is GPS; that stretch reads CVQWDPPGPTDQHGMWTARDCELVHRNGSHARCRCSRTGTFGVLMDASPRE. Residues 2532–2552 form a helical membrane-spanning segment; it reads VFTHVVVAVSVTALVLTAAVL. The Cytoplasmic portion of the chain corresponds to 2553–2563; sequence LSLRSLKSNVR. Residues 2564 to 2584 traverse the membrane as a helical segment; that stretch reads GIHANVAAALGVAELLFLLGI. Residues 2585–2592 are Extracellular-facing; the sequence is HRTHNQLL. Residues 2593–2613 traverse the membrane as a helical segment; sequence CTAVAILLHYFFLSTFAWLLV. The Cytoplasmic portion of the chain corresponds to 2614–2634; that stretch reads QGLHLYRMQVEPRNVDRGAMR. Residues 2635–2655 form a helical membrane-spanning segment; sequence FYHALGWGVPAVLLGLAVGLD. At 2656-2673 the chain is on the extracellular side; that stretch reads PEGYGNPDFCWISIHEPL. Residues 2674-2694 traverse the membrane as a helical segment; sequence IWSFAGPIVLVIVMNGTMFLL. The Cytoplasmic segment spans residues 2695-2716; it reads AARTSCSTGQREAKKTSVLTLR. The helical transmembrane segment at 2717-2737 threads the bilayer; that stretch reads SSFLLLLLVSASWLFGLLAVN. At 2738–2744 the chain is on the extracellular side; it reads HSILAFH. Residues 2745–2765 traverse the membrane as a helical segment; it reads YLHAGLCGLQGLAVLLLFCVL. The Cytoplasmic segment spans residues 2766–3301; the sequence is NADARAAWTP…SEVPRSEGHS (536 aa). Disordered regions lie at residues 2823–2844, 2879–2919, and 2969–2992; these read SSARSGRAQDQDSQRGRSYLRD, AGAD…RPLR, and SNKDAANNNQPELALTSGDETSLG. Positions 2881 to 2891 are enriched in acidic residues; sequence ADSDSDSDLSL. Over residues 2910 to 2919 the composition is skewed to basic residues; it reads TRGRFQRPLR. At Y3042 the chain carries Phosphotyrosine. The segment at 3083–3301 is disordered; it reads APVLHPLSRP…SEVPRSEGHS (219 aa). S3090 is subject to Phosphoserine. Basic and acidic residues predominate over residues 3094–3111; that stretch reads SQERLDTAPARLEARDRG. Composition is skewed to low complexity over residues 3168-3189 and 3239-3261; these read SPQRQLSRDPLLPSRPLDSLSR and LSSILASFNSSALSSVQSSSTPS. Residues 3276-3289 show a composition bias toward polar residues; it reads TPRSATSHSISELS.

Belongs to the G-protein coupled receptor 2 family. LN-TM7 subfamily. In terms of tissue distribution, expressed in the CNS and in the eye.

Its subcellular location is the cell membrane. Its function is as follows. Receptor that may have an important role in cell/cell signaling during nervous system formation. The polypeptide is Cadherin EGF LAG seven-pass G-type receptor 3 (Celsr3) (Mus musculus (Mouse)).